The following is a 91-amino-acid chain: Probable Fe(2+)-trafficking protein (91 aa).

The protein belongs to the Fe(2+)-trafficking protein family.

Its function is as follows. Could be a mediator in iron transactions between iron acquisition and iron-requiring processes, such as synthesis and/or repair of Fe-S clusters in biosynthetic enzymes. The protein is Probable Fe(2+)-trafficking protein of Shewanella denitrificans (strain OS217 / ATCC BAA-1090 / DSM 15013).